The primary structure comprises 307 residues: Porphobilinogen deaminase (307 aa).

Position 239 is an S-(dipyrrolylmethanemethyl)cysteine (cysteine 239).

Belongs to the HMBS family. As to quaternary structure, monomer. Dipyrromethane is required as a cofactor.

It catalyses the reaction 4 porphobilinogen + H2O = hydroxymethylbilane + 4 NH4(+). Its pathway is porphyrin-containing compound metabolism; protoporphyrin-IX biosynthesis; coproporphyrinogen-III from 5-aminolevulinate: step 2/4. Its function is as follows. Tetrapolymerization of the monopyrrole PBG into the hydroxymethylbilane pre-uroporphyrinogen in several discrete steps. This chain is Porphobilinogen deaminase, found in Campylobacter jejuni subsp. doylei (strain ATCC BAA-1458 / RM4099 / 269.97).